Here is a 357-residue protein sequence, read N- to C-terminus: Probable 3'(2'),5'-bisphosphate nucleotidase 3 (357 aa).

The active-site Proton acceptor is the Asp-46. Residues Glu-71, Asp-135, and Ile-137 each coordinate Mg(2+). Thr-140 acts as the Proton acceptor in catalysis. Adenosine 3',5'-bisphosphate is bound by residues Thr-140, Ser-256, Lys-259, and Arg-273. AMP contacts are provided by Ser-256, Lys-259, and Arg-273.

Belongs to the inositol monophosphatase superfamily. Requires Mg(2+) as cofactor.

It catalyses the reaction 3'-phosphoadenylyl sulfate + H2O = adenosine 5'-phosphosulfate + phosphate. It carries out the reaction adenosine 3',5'-bisphosphate + H2O = AMP + phosphate. The catalysed reaction is adenosine 2',5'-bisphosphate + H2O = AMP + phosphate. The enzyme catalyses 1D-myo-inositol 1,4-bisphosphate + H2O = 1D-myo-inositol 4-phosphate + phosphate. It catalyses the reaction 1D-myo-inositol 1,3,4-trisphosphate + H2O = 1D-myo-inositol 3,4-bisphosphate + phosphate. The protein operates within signal transduction; phosphatidylinositol signaling pathway. Phosphatase that converts adenosine 3'-phosphate 5'-phosphosulfate (PAPS) to adenosine 5'-phosphosulfate (APS) and 3'(2')-phosphoadenosine 5'-phosphate (PAP) to AMP. Is also able to hydrolyze inositol 1,4-bisphosphate and inositol 1,3,4-trisphosphate. This chain is Probable 3'(2'),5'-bisphosphate nucleotidase 3 (SAL3), found in Arabidopsis thaliana (Mouse-ear cress).